The following is a 41-amino-acid chain: Large ribosomal subunit protein bL36 (41 aa).

It belongs to the bacterial ribosomal protein bL36 family.

The polypeptide is Large ribosomal subunit protein bL36 (Chelativorans sp. (strain BNC1)).